The primary structure comprises 210 residues: ATP phosphoribosyltransferase (210 aa).

The protein belongs to the ATP phosphoribosyltransferase family. Short subfamily. In terms of assembly, heteromultimer composed of HisG and HisZ subunits.

It localises to the cytoplasm. It catalyses the reaction 1-(5-phospho-beta-D-ribosyl)-ATP + diphosphate = 5-phospho-alpha-D-ribose 1-diphosphate + ATP. It functions in the pathway amino-acid biosynthesis; L-histidine biosynthesis; L-histidine from 5-phospho-alpha-D-ribose 1-diphosphate: step 1/9. Functionally, catalyzes the condensation of ATP and 5-phosphoribose 1-diphosphate to form N'-(5'-phosphoribosyl)-ATP (PR-ATP). Has a crucial role in the pathway because the rate of histidine biosynthesis seems to be controlled primarily by regulation of HisG enzymatic activity. This Bacillus cytotoxicus (strain DSM 22905 / CIP 110041 / 391-98 / NVH 391-98) protein is ATP phosphoribosyltransferase.